Reading from the N-terminus, the 65-residue chain is Beta-toxin Am IT (65 aa).

At Glu1 the chain carries Pyrrolidone carboxylic acid (Glu); partial. Residues 1–64 (EHGYLLDKYT…LWNYKTNKCK (64 aa)) enclose the LCN-type CS-alpha/beta domain. Disulfide bonds link Cys12–Cys63, Cys16–Cys38, Cys23–Cys45, and Cys27–Cys47. Ser65 is subject to Serine amide.

Belongs to the long (4 C-C) scorpion toxin superfamily. Sodium channel inhibitor family. Expressed by the venom gland.

It localises to the secreted. Functionally, has a toxic effect on insects and mammals. On German cockroach larvae, it provokes contraction, paralysis and lethality. Intracerebroventricular injection into mice causes severe neurotoxic symptoms. It fully competes with the binding of the iodinated Css4 (AC P60266) on rat brain synaptosomes, with moderate affinity and in a concentration-dependent manner (EC(50)=25 nM). It may act on both site 3 and site 4 of voltage-gated sodium channels. This chain is Beta-toxin Am IT, found in Androctonus mauritanicus mauritanicus (Scorpion).